A 101-amino-acid polypeptide reads, in one-letter code: Small ribosomal subunit protein uS14 (101 aa).

It belongs to the universal ribosomal protein uS14 family. As to quaternary structure, part of the 30S ribosomal subunit. Contacts proteins S3 and S10.

Functionally, binds 16S rRNA, required for the assembly of 30S particles and may also be responsible for determining the conformation of the 16S rRNA at the A site. This chain is Small ribosomal subunit protein uS14, found in Ehrlichia ruminantium (strain Welgevonden).